An 830-amino-acid chain; its full sequence is Cadherin-16 (830 aa).

The first 21 residues, 1-21 (MISARPWLLYLSVIQAFTTEA), serve as a signal peptide directing secretion. Residues 22-788 (QPAESLHTEV…MKGMPTKLSA (767 aa)) are Extracellular-facing. Cadherin domains lie at 27 to 128 (LHTE…VPQF), 133 to 237 (YRAQ…SIVE), 244 to 338 (EPVH…APVC), 343 to 451 (PTVN…APEF), 457 to 566 (GPVT…PLKL), and 571 to 667 (YETS…VPAL). Asn519, Asn604, and Asn724 each carry an N-linked (GlcNAc...) asparagine glycan. Residues 668 to 788 (TLSAGPSRHL…MKGMPTKLSA (121 aa)) form an ectodomain G region. Residues 789–809 (VGVLLGTLAAIGFILILVFTH) form a helical membrane-spanning segment. Residues 810–830 (LALARKDLDQPADSVPLKAAV) lie on the Cytoplasmic side of the membrane. Position 823 is a phosphoserine (Ser823).

In terms of tissue distribution, kidney specific.

Its subcellular location is the cell membrane. Its function is as follows. Cadherins are calcium-dependent cell adhesion proteins. They preferentially interact with themselves in a homophilic manner in connecting cells; cadherins may thus contribute to the sorting of heterogeneous cell types. The polypeptide is Cadherin-16 (Cdh16) (Mus musculus (Mouse)).